We begin with the raw amino-acid sequence, 176 residues long: ATP synthase subunit b 2 (176 aa).

A helical transmembrane segment spans residues 29-49 (IFWLVITLVIIYMVLSKVALP).

It belongs to the ATPase B chain family. F-type ATPases have 2 components, F(1) - the catalytic core - and F(0) - the membrane proton channel. F(1) has five subunits: alpha(3), beta(3), gamma(1), delta(1), epsilon(1). F(0) has three main subunits: a(1), b(2) and c(10-14). The alpha and beta chains form an alternating ring which encloses part of the gamma chain. F(1) is attached to F(0) by a central stalk formed by the gamma and epsilon chains, while a peripheral stalk is formed by the delta and b chains.

The protein localises to the cell inner membrane. F(1)F(0) ATP synthase produces ATP from ADP in the presence of a proton or sodium gradient. F-type ATPases consist of two structural domains, F(1) containing the extramembraneous catalytic core and F(0) containing the membrane proton channel, linked together by a central stalk and a peripheral stalk. During catalysis, ATP synthesis in the catalytic domain of F(1) is coupled via a rotary mechanism of the central stalk subunits to proton translocation. In terms of biological role, component of the F(0) channel, it forms part of the peripheral stalk, linking F(1) to F(0). The b'-subunit is a diverged and duplicated form of b found in plants and photosynthetic bacteria. The protein is ATP synthase subunit b 2 (atpF2) of Roseobacter denitrificans (strain ATCC 33942 / OCh 114) (Erythrobacter sp. (strain OCh 114)).